Here is a 411-residue protein sequence, read N- to C-terminus: Imidazolonepropionase (411 aa).

Residues histidine 78 and histidine 80 each contribute to the Fe(3+) site. The Zn(2+) site is built by histidine 78 and histidine 80. Residues arginine 87, tyrosine 150, and histidine 183 each contribute to the 4-imidazolone-5-propanoate site. An N-formimidoyl-L-glutamate-binding site is contributed by tyrosine 150. Fe(3+) is bound at residue histidine 248. Histidine 248 serves as a coordination point for Zn(2+). Position 251 (glutamine 251) interacts with 4-imidazolone-5-propanoate. Aspartate 322 serves as a coordination point for Fe(3+). Aspartate 322 lines the Zn(2+) pocket. Positions 324 and 326 each coordinate N-formimidoyl-L-glutamate. Residue threonine 327 participates in 4-imidazolone-5-propanoate binding.

Belongs to the metallo-dependent hydrolases superfamily. HutI family. Zn(2+) serves as cofactor. Requires Fe(3+) as cofactor.

It is found in the cytoplasm. It carries out the reaction 4-imidazolone-5-propanoate + H2O = N-formimidoyl-L-glutamate. It functions in the pathway amino-acid degradation; L-histidine degradation into L-glutamate; N-formimidoyl-L-glutamate from L-histidine: step 3/3. Its function is as follows. Catalyzes the hydrolytic cleavage of the carbon-nitrogen bond in imidazolone-5-propanoate to yield N-formimidoyl-L-glutamate. It is the third step in the universal histidine degradation pathway. This is Imidazolonepropionase from Flavobacterium psychrophilum (strain ATCC 49511 / DSM 21280 / CIP 103535 / JIP02/86).